The sequence spans 277 residues: Tryptophan synthase alpha chain (277 aa).

Residues glutamate 42 and glutamate 53 each act as proton acceptor in the active site.

This sequence belongs to the TrpA family. Tetramer of two alpha and two beta chains.

The catalysed reaction is (1S,2R)-1-C-(indol-3-yl)glycerol 3-phosphate + L-serine = D-glyceraldehyde 3-phosphate + L-tryptophan + H2O. The protein operates within amino-acid biosynthesis; L-tryptophan biosynthesis; L-tryptophan from chorismate: step 5/5. The alpha subunit is responsible for the aldol cleavage of indoleglycerol phosphate to indole and glyceraldehyde 3-phosphate. This chain is Tryptophan synthase alpha chain, found in Natronomonas pharaonis (strain ATCC 35678 / DSM 2160 / CIP 103997 / JCM 8858 / NBRC 14720 / NCIMB 2260 / Gabara) (Halobacterium pharaonis).